The following is a 124-amino-acid chain: Putative outer membrane protein TC_0858 (124 aa).

Residues 1-31 form the signal peptide; it reads MGKTKKRKQSITLIEMMVVITLIGIISGALA.

Its subcellular location is the cell outer membrane. This Chlamydia muridarum (strain MoPn / Nigg) protein is Putative outer membrane protein TC_0858.